Reading from the N-terminus, the 949-residue chain is MKKILDSAKNYLNTHDKLKTACLIALELPSSSGSAATYIYLTDYFRDVTYNGILYRSGKVKSISSHKQNRQLSIGSLSFTITGTAEDEVLKLVQNGVSFLDRGITIHQAIINEEGNILPVDPDTDGPLLFFRGRITGGGIKDNVNTSGIGTSVITWNCSNQFYDFDRVNGRYTDDASHRGLEVVNGTLQPSNGAKRPEYQEDYGFFHSNKSTTILAKYQVKEERYKLQSKKKLFGLSRSYSLKKYYETVTKEVDLDFNLAAKFIPVVYGVQKIPGIPIFADTELNNPNIVYVVYAFAEGEIDGFLDFYIGDSPMICFDETDSDTRTCFGRKKIVGDTMHRLAAGTSTSQPSVHGQEYKYNDGNGDIRIWTFHGKPDQTAAQVLVDIAKKKGFYLQNQNGNGPEYWDSRYKLLDTAYAIVRFTINENRTEIPEISAEVQGKKVKVYNSDGTIKADKTSLNGIWQLMDYLTSDRYGADITLDQFPLQKVISEAKILDIIDESYQTSWQPYWRYVGWNDPLSENRQIVQLNTILDTSESVFKNVQGILESFGGAINNLSGEYRITVEKYSTNPLRINFLDTYGDLDLSDTTGRNKFNSVQASLVDPALSWKTNSITFYNSKFKEQDKGLDKKLQLSFANITNYYTARSYADRELKKSRYSRTLSFSVPYKFIGIEPNDPIAFTYERYGWKDKFFLVDEVENTRDGKINLVLQEYGEDVFINSEQVDNSGNDIPDISNNVLPPRDFKYTPTPGGVVGAIGKNGELSWLPSLTNNVVYYSIAHSGHVNPYIVQQLENNPNERMIQEIIGEPAGLAIFELRAVDINGRRSSPVTLSVDLNSAKNLSVVSNFRVVNTASGDVTEFVGPDVKLAWDKIPEEEIIPEIYYTLEIYDSQDRMLRSVRIEDVYTYDYLLTYNKADFALLNSGALGINRKLRFRIRAEGENGEQSVGWATI.

As to quaternary structure, homotrimer. Forms a pseudo-hexameric ring. Interacts with distal tail protein pb9 and straight fiber protein pb4. In terms of processing, ubiquitinated by the Bil antiviral defense system when this protein is expressed in E.coli MG1655 strain expressing the Bil system.

It localises to the virion. Its function is as follows. Forms the simplified baseplate, together with the p132 collar protein, the baseplate tube protein p140 and distal tail protein pb9. Closes the tail tube and, upon infection, opens to form a channel thereby anchoring the tube to the outer membrane. These changes allow the tape measure protein pb2 to be expelled and phage DNA to be transferred to the host. Also forms the start of the central straight fiber, which is continued with the straight fiber protein pb4. In Escherichia coli (Enterobacteria phage T5), this protein is Baseplate hub protein pb3.